A 127-amino-acid chain; its full sequence is Snaclec bothroinsularin subunit beta (127 aa).

Disulfide bonds link cysteine 2/cysteine 13, cysteine 30/cysteine 123, and cysteine 100/cysteine 115. Residues 9 to 124 form the C-type lectin domain; the sequence is YEGSCYRVFE…CTKLEYFVCE (116 aa).

It belongs to the snaclec family. As to quaternary structure, heterodimer of subunits alpha and beta; disulfide-linked. As to expression, expressed by the venom gland.

The protein resides in the secreted. Its function is as follows. Thrombin and prothrombin (F2) inhibitor. The IC(50) of thrombin-induced platelet aggregation and fibrinocoagulation is 62 and 35 nM, respectively. Its inhibitory activity is at least 10-fold lower than that observed for other thrombin inhibitors. In Bothrops insularis (Golden lancehead), this protein is Snaclec bothroinsularin subunit beta.